A 418-amino-acid polypeptide reads, in one-letter code: Neurotensin receptor type 1 (418 aa).

Residues 1–67 (MRLNSSAPGT…TDIYSKVLVT (67 aa)) lie on the Extracellular side of the membrane. Residues N4, N37, and N41 are each glycosylated (N-linked (GlcNAc...) asparagine). A helical transmembrane segment spans residues 68–88 (AVYLALFVVGTVGNTVTAFTL). At 89-102 (ARKKSLQSLQSTVH) the chain is on the cytoplasmic side. The helical transmembrane segment at 103-122 (YHLGSLALSDLLTLLLAMPV) threads the bilayer. At 123-142 (ELYNFIWVHHPWAFGDAGCR) the chain is on the extracellular side. C141 and C224 form a disulfide bridge. The chain crosses the membrane as a helical span at residues 143 to 164 (GYYFLRDACTYATALNVASLSV). Topologically, residues 165-184 (ERYLAICHPFKAKTLMSRSR) are cytoplasmic. Residues 185-205 (TKKFISAIWLASALLAVPMLF) form a helical membrane-spanning segment. The Extracellular segment spans residues 206–234 (TMGEQNRSADGQHAGGLVCTPTIHTATVK). A helical membrane pass occupies residues 235–259 (VVIQVNTFMSFIFPMVVISVLNTII). Residues 260 to 303 (ANKLTVMVRQAAEQGQVCTVGGEHSTFSMAIEPGRVQALRHGVR) lie on the Cytoplasmic side of the membrane. The chain crosses the membrane as a helical span at residues 304–325 (VLRAVVIAFVVCWLPYHVRRLM). Residues 321 to 344 (VRRLMFCYISDEQWTPFLYDFYHY) form a neurotensin binding region. At 326 to 343 (FCYISDEQWTPFLYDFYH) the chain is on the extracellular side. Residues 344–364 (YFYMVTNALFYVSSTINPILY) form a helical membrane-spanning segment. Topologically, residues 365 to 418 (NLVSANFRHIFLATLACLCPVWRRRRKRPAFSRKADSVSSNHTLSSNATRETLY) are cytoplasmic. 2 S-palmitoyl cysteine lipidation sites follow: C381 and C383.

This sequence belongs to the G-protein coupled receptor 1 family. Neurotensin receptor subfamily. NTSR1 sub-subfamily. As to quaternary structure, interacts (palmitoylated form) with GNA11. In terms of processing, N-glycosylated. Post-translationally, palmitoylated; this is required for normal localization at membrane rafts and normal GNA11-mediated activation of down-stream signaling cascades. The palmitoylation level increases in response to neurotensin treatment. As to expression, expressed in prostate (at protein level). Detected in colon and peripheral blood mononuclear cells. Detected at very low levels in brain.

It localises to the cell membrane. It is found in the membrane raft. G-protein coupled receptor for the tridecapeptide neurotensin (NTS). Signaling is effected via G proteins that activate a phosphatidylinositol-calcium second messenger system. Signaling leads to the activation of downstream MAP kinases and protects cells against apoptosis. The chain is Neurotensin receptor type 1 (NTSR1) from Homo sapiens (Human).